Here is a 157-residue protein sequence, read N- to C-terminus: MKLNDLRDKDGATHSKKRLGRGIGSGSGKTAGRGVKGQKARSGVAINGFEGGQMPLYRRLPKRGFNNIFAKSFVVVSLARIQEAVDAKKLDAKATVTAEALVAAGVIRRVKDGVRVLSDGELKAKLAFDVAGASKAAIEKIEKAGGSVKLPEKAAAE.

A compositionally biased stretch (basic and acidic residues) spans Met1–Thr13. The interval Met1 to Lys39 is disordered. A compositionally biased stretch (gly residues) spans Arg21–Val35.

It belongs to the universal ribosomal protein uL15 family. Part of the 50S ribosomal subunit.

Binds to the 23S rRNA. In Mesorhizobium japonicum (strain LMG 29417 / CECT 9101 / MAFF 303099) (Mesorhizobium loti (strain MAFF 303099)), this protein is Large ribosomal subunit protein uL15.